The sequence spans 455 residues: Kynureninase (455 aa).

Residues Leu-94, Thr-95, 122-125 (FPSD), Asp-208, His-211, and Tyr-233 contribute to the pyridoxal 5'-phosphate site. Residue Lys-234 is modified to N6-(pyridoxal phosphate)lysine. The pyridoxal 5'-phosphate site is built by Trp-275 and Asn-303.

Belongs to the kynureninase family. Homodimer. Pyridoxal 5'-phosphate serves as cofactor.

It localises to the cytoplasm. The catalysed reaction is L-kynurenine + H2O = anthranilate + L-alanine + H(+). It catalyses the reaction 3-hydroxy-L-kynurenine + H2O = 3-hydroxyanthranilate + L-alanine + H(+). It functions in the pathway amino-acid degradation; L-kynurenine degradation; L-alanine and anthranilate from L-kynurenine: step 1/1. Its pathway is cofactor biosynthesis; NAD(+) biosynthesis; quinolinate from L-kynurenine: step 2/3. Catalyzes the cleavage of L-kynurenine (L-Kyn) and L-3-hydroxykynurenine (L-3OHKyn) into anthranilic acid (AA) and 3-hydroxyanthranilic acid (3-OHAA), respectively. The sequence is that of Kynureninase from Vanderwaltozyma polyspora (strain ATCC 22028 / DSM 70294 / BCRC 21397 / CBS 2163 / NBRC 10782 / NRRL Y-8283 / UCD 57-17) (Kluyveromyces polysporus).